The following is a 206-amino-acid chain: Large ribosomal subunit protein uL4 (206 aa).

Residues 47–79 are disordered; sequence GTKGQKNRSAVRGGGAKPWAQKGSGRARAGTSR. The span at 69 to 79 shows a compositional bias: low complexity; sequence GSGRARAGTSR.

Belongs to the universal ribosomal protein uL4 family. As to quaternary structure, part of the 50S ribosomal subunit.

In terms of biological role, one of the primary rRNA binding proteins, this protein initially binds near the 5'-end of the 23S rRNA. It is important during the early stages of 50S assembly. It makes multiple contacts with different domains of the 23S rRNA in the assembled 50S subunit and ribosome. Forms part of the polypeptide exit tunnel. The protein is Large ribosomal subunit protein uL4 of Hydrogenovibrio crunogenus (strain DSM 25203 / XCL-2) (Thiomicrospira crunogena).